Here is a 233-residue protein sequence, read N- to C-terminus: Small ribosomal subunit protein uS2 (233 aa).

This sequence belongs to the universal ribosomal protein uS2 family.

The chain is Small ribosomal subunit protein uS2 from Clostridium botulinum (strain Alaska E43 / Type E3).